The primary structure comprises 160 residues: Protransforming growth factor alpha (160 aa).

An N-terminal signal peptide occupies residues 1-23 (MVPSAGQLALFALGIVLAACQAL). Residues 24–39 (ENSTSPLSADPPVAAA) constitute a propeptide, removed in mature form. Topologically, residues 24 to 98 (ENSTSPLSAD…AVVAASQKKQ (75 aa)) are extracellular. The N-linked (GlcNAc...) asparagine glycan is linked to asparagine 25. An EGF-like domain is found at 43 to 83 (HFNDCPDSHTQFCFHGTCRFLVQEDKPACVCHSGYVGARCE). Disulfide bonds link cysteine 47-cysteine 60, cysteine 55-cysteine 71, and cysteine 73-cysteine 82. Residues 90-160 (VVAASQKKQA…TACCHSETVV (71 aa)) constitute a propeptide, removed in mature form. The helical transmembrane segment at 99–124 (AITALVVVSIVALAVLIITCVLIHCC) threads the bilayer. Residues 125–160 (QVRKHCEWCRALICRHEKPSALLKGRTACCHSETVV) lie on the Cytoplasmic side of the membrane. S-palmitoyl cysteine attachment occurs at residues cysteine 153 and cysteine 154.

Interacts with the PDZ domains of MAGI3, SDCBP and SNTA1. The interaction with SDCBP, is required for the targeting to the cell surface. In the endoplasmic reticulum, in its immature form (i.e. with a prosegment and lacking full N-glycosylation), interacts with CNIH. In the Golgi apparatus, may form a complex with CNIH and GORASP2. Interacts (via cytoplasmic C-terminal domain) with NKD2. In terms of tissue distribution, isoform 1, isoform 3 and isoform 4 are expressed in keratinocytes and tumor-derived cell lines.

The protein localises to the secreted. It localises to the extracellular space. The protein resides in the cell membrane. In terms of biological role, TGF alpha is a mitogenic polypeptide that is able to bind to the EGF receptor/EGFR and to act synergistically with TGF beta to promote anchorage-independent cell proliferation in soft agar. The protein is Protransforming growth factor alpha (TGFA) of Homo sapiens (Human).